We begin with the raw amino-acid sequence, 150 residues long: Small ribosomal subunit protein bS6 (150 aa).

Positions 92 to 150 (KGINKPAKPKKTFKKTFVARKFSRDDESKTHSTEEPRRANTKSTYKKSTSFSQDNKNKK) are disordered. Residues 98 to 109 (AKPKKTFKKTFV) show a composition bias toward basic residues. Residues 113 to 129 (FSRDDESKTHSTEEPRR) are compositionally biased toward basic and acidic residues. Residues 132–141 (TKSTYKKSTS) are compositionally biased toward low complexity.

This sequence belongs to the bacterial ribosomal protein bS6 family.

Its function is as follows. Binds together with bS18 to 16S ribosomal RNA. This Mycoplasmopsis pulmonis (strain UAB CTIP) (Mycoplasma pulmonis) protein is Small ribosomal subunit protein bS6.